The sequence spans 347 residues: NADH-ubiquinone oxidoreductase chain 2 (347 aa).

10 consecutive transmembrane segments (helical) span residues 1–21, 25–45, 59–79, 96–116, 122–142, 149–169, 200–220, 239–259, 274–294, and 325–345; these read MNPSIFIILLTTLILGTMMVI, HWLLAWIGFEMNMMAFIPIMM, YLLTQATASALLMMAVIINLM, TLMTVALAIKLGLAPFHFWVP, IPLTTGLILLTWQKLAPLSIL, INLYLMLTMSLLSILVGGWGG, LTLLNLLIYITMTFTMFMLFI, IITTLTMLTLLSMGGLPPLSG, DILIMPTFMAITALLNLYFYM, and LLPTAIVISTMLLPLTPMLSI.

This sequence belongs to the complex I subunit 2 family. In terms of assembly, core subunit of respiratory chain NADH dehydrogenase (Complex I) which is composed of 45 different subunits. Interacts with TMEM242.

Its subcellular location is the mitochondrion inner membrane. The catalysed reaction is a ubiquinone + NADH + 5 H(+)(in) = a ubiquinol + NAD(+) + 4 H(+)(out). Its function is as follows. Core subunit of the mitochondrial membrane respiratory chain NADH dehydrogenase (Complex I) which catalyzes electron transfer from NADH through the respiratory chain, using ubiquinone as an electron acceptor. Essential for the catalytic activity and assembly of complex I. This chain is NADH-ubiquinone oxidoreductase chain 2, found in Balaenoptera musculus (Blue whale).